We begin with the raw amino-acid sequence, 51 residues long: Large ribosomal subunit protein bL33 (51 aa).

Positions Met1–Lys23 are disordered. Polar residues predominate over residues Ser10–Thr20.

This sequence belongs to the bacterial ribosomal protein bL33 family.

This chain is Large ribosomal subunit protein bL33, found in Nitrosomonas eutropha (strain DSM 101675 / C91 / Nm57).